A 174-amino-acid polypeptide reads, in one-letter code: CASP-like protein 4D2 (174 aa).

Over 1 to 14 the chain is Cytoplasmic; it reads MAPPPPSPPAVSLK. The helical transmembrane segment at 15–35 threads the bilayer; it reads VLLLLLRVLTGVFLVIALIIL. Over 36–60 the chain is Extracellular; it reads STNSVTIVSQGSALKFHFKDVYAYR. Residues 61 to 81 traverse the membrane as a helical segment; that stretch reads YMLSAAVIGLVYAVIQLFFTI. The Cytoplasmic segment spans residues 82-97; it reads SEFATGVKNPFNYQLD. The chain crosses the membrane as a helical span at residues 98 to 118; sequence FYGDKLISYLVATGSAAGFGV. Over 119-150 the chain is Extracellular; sequence TKDLKDTFLALVALDSTDPVDKFFSKGYASAS. A helical membrane pass occupies residues 151–171; the sequence is LLLFAFICLAVLSVFSSFAMA. At 172–174 the chain is on the cytoplasmic side; it reads KRN.

Belongs to the Casparian strip membrane proteins (CASP) family. In terms of assembly, homodimer and heterodimers.

The protein resides in the cell membrane. The protein is CASP-like protein 4D2 of Arabidopsis thaliana (Mouse-ear cress).